Consider the following 139-residue polypeptide: Large-conductance mechanosensitive channel (139 aa).

Helical transmembrane passes span Val16–Leu36, Ile40–Val60, and Gly79–Val99.

It belongs to the MscL family. In terms of assembly, homopentamer.

It is found in the cell inner membrane. Functionally, channel that opens in response to stretch forces in the membrane lipid bilayer. May participate in the regulation of osmotic pressure changes within the cell. The polypeptide is Large-conductance mechanosensitive channel (Phenylobacterium zucineum (strain HLK1)).